The sequence spans 278 residues: MITEFIDGLQQFHFLQNALITAIAIGIVAGAVGCFIILRGMSLMGDAISHAVLPGVALSFILGINFFIGAIAFGLLASILITYIKSNSIIKSDTAMGYLSLPRPRSHSDRVAKSSTDLFHILFGNILAVQDQDMWVTIGVGVAVLLVIVLLFRPLLLTSFDPVLAQSMGVRVKLYHYLLMVLLTLVSVTAMQSVGTILIAAMLITPAATAYLYANSLWSMMLLSSGLGALASILGLFIGYSFNIAVGSCIVLTSAIFFLISFFIAPKQRKNKHALSPH.

The next 8 helical transmembrane spans lie at 18–38 (ALIT…FIIL), 40–60 (GMSL…ALSF), 61–81 (ILGI…SILI), 136–156 (VTIG…RPLL), 172–192 (VKLY…TAMQ), 194–214 (VGTI…YLYA), 220–240 (MMLL…FIGY), and 244–264 (IAVG…SFFI).

Belongs to the ABC-3 integral membrane protein family.

The protein localises to the cell membrane. Part of an ABC transporter complex involved in manganese import. This chain is Manganese import system permease protein ScaB, found in Streptococcus pneumoniae.